The primary structure comprises 823 residues: Aminopeptidase O (823 aa).

Histidine 481 lines the Zn(2+) pocket. The active-site Proton acceptor is glutamate 482. 2 residues coordinate Zn(2+): histidine 485 and glutamate 504. The short motif at 693-703 is the Nucleolar localization signal element; the sequence is RRPRKRKRGKR.

It belongs to the peptidase M1 family. Requires Zn(2+) as cofactor. As to expression, expressed in testis, heart, brain, lung, liver, skeletal muscle, kidney and ovary. Expressed in vascular tissues.

It localises to the nucleus. Its subcellular location is the nucleolus. The protein localises to the cytoplasm. Aminopeptidase which catalyzes the hydrolysis of amino acid residues from the N-terminus of peptide or protein substrates. The sequence is that of Aminopeptidase O (Aopep) from Mus musculus (Mouse).